Here is a 159-residue protein sequence, read N- to C-terminus: 6,7-dimethyl-8-ribityllumazine synthase (159 aa).

5-amino-6-(D-ribitylamino)uracil is bound by residues phenylalanine 22, 57–59, and 81–83; these read AVE and AVI. 86-87 is a (2S)-2-hydroxy-3-oxobutyl phosphate binding site; it reads GT. Residue histidine 89 is the Proton donor of the active site. 5-amino-6-(D-ribitylamino)uracil is bound at residue phenylalanine 114. Position 128 (arginine 128) interacts with (2S)-2-hydroxy-3-oxobutyl phosphate.

This sequence belongs to the DMRL synthase family. Forms an icosahedral capsid composed of 60 subunits, arranged as a dodecamer of pentamers.

The catalysed reaction is (2S)-2-hydroxy-3-oxobutyl phosphate + 5-amino-6-(D-ribitylamino)uracil = 6,7-dimethyl-8-(1-D-ribityl)lumazine + phosphate + 2 H2O + H(+). The protein operates within cofactor biosynthesis; riboflavin biosynthesis; riboflavin from 2-hydroxy-3-oxobutyl phosphate and 5-amino-6-(D-ribitylamino)uracil: step 1/2. Functionally, catalyzes the formation of 6,7-dimethyl-8-ribityllumazine by condensation of 5-amino-6-(D-ribitylamino)uracil with 3,4-dihydroxy-2-butanone 4-phosphate. This is the penultimate step in the biosynthesis of riboflavin. This Shewanella denitrificans (strain OS217 / ATCC BAA-1090 / DSM 15013) protein is 6,7-dimethyl-8-ribityllumazine synthase.